Reading from the N-terminus, the 732-residue chain is Catalase-peroxidase (732 aa).

Residues 1–24 (MDAKTDDNSAGKCPVAHGSAGRTN) are disordered. The tryptophyl-tyrosyl-methioninium (Trp-Tyr) (with M-245) cross-link spans 96 to 219 (WHSAGTYRIA…LGAVQMGLIY (124 aa)). The active-site Proton acceptor is His97. The segment at residues 219–245 (YVNPEGPNGNPDPLAAARDIRDTFARM) is a cross-link (tryptophyl-tyrosyl-methioninium (Tyr-Met) (with W-96)). His260 lines the heme b pocket.

This sequence belongs to the peroxidase family. Peroxidase/catalase subfamily. As to quaternary structure, homodimer or homotetramer. Heme b serves as cofactor. Post-translationally, formation of the three residue Trp-Tyr-Met cross-link is important for the catalase, but not the peroxidase activity of the enzyme.

The catalysed reaction is H2O2 + AH2 = A + 2 H2O. The enzyme catalyses 2 H2O2 = O2 + 2 H2O. Bifunctional enzyme with both catalase and broad-spectrum peroxidase activity. This chain is Catalase-peroxidase, found in Mesorhizobium japonicum (strain LMG 29417 / CECT 9101 / MAFF 303099) (Mesorhizobium loti (strain MAFF 303099)).